We begin with the raw amino-acid sequence, 127 residues long: Protein ApaG (127 aa).

The 126-residue stretch at 2–127 folds into the ApaG domain; it reads SELVEHIQVH…FRLAGPNQVH (126 aa).

The polypeptide is Protein ApaG (Chromohalobacter salexigens (strain ATCC BAA-138 / DSM 3043 / CIP 106854 / NCIMB 13768 / 1H11)).